Consider the following 338-residue polypeptide: S-adenosylmethionine:tRNA ribosyltransferase-isomerase (338 aa).

Belongs to the QueA family. In terms of assembly, monomer.

It is found in the cytoplasm. It carries out the reaction 7-aminomethyl-7-carbaguanosine(34) in tRNA + S-adenosyl-L-methionine = epoxyqueuosine(34) in tRNA + adenine + L-methionine + 2 H(+). It functions in the pathway tRNA modification; tRNA-queuosine biosynthesis. Its function is as follows. Transfers and isomerizes the ribose moiety from AdoMet to the 7-aminomethyl group of 7-deazaguanine (preQ1-tRNA) to give epoxyqueuosine (oQ-tRNA). This is S-adenosylmethionine:tRNA ribosyltransferase-isomerase from Francisella tularensis subsp. tularensis (strain WY96-3418).